Consider the following 503-residue polypeptide: Asparagine--tRNA ligase (503 aa).

The protein belongs to the class-II aminoacyl-tRNA synthetase family. Homodimer.

It localises to the cytoplasm. It catalyses the reaction tRNA(Asn) + L-asparagine + ATP = L-asparaginyl-tRNA(Asn) + AMP + diphosphate + H(+). The sequence is that of Asparagine--tRNA ligase from Aster yellows witches'-broom phytoplasma (strain AYWB).